Here is a 417-residue protein sequence, read N- to C-terminus: Serine hydroxymethyltransferase (417 aa).

(6S)-5,6,7,8-tetrahydrofolate-binding positions include Leu121 and 125 to 127 (GHL). Residue Lys229 is modified to N6-(pyridoxal phosphate)lysine. 355–357 (SPF) contributes to the (6S)-5,6,7,8-tetrahydrofolate binding site.

The protein belongs to the SHMT family. As to quaternary structure, homodimer. Pyridoxal 5'-phosphate serves as cofactor.

The protein localises to the cytoplasm. It carries out the reaction (6R)-5,10-methylene-5,6,7,8-tetrahydrofolate + glycine + H2O = (6S)-5,6,7,8-tetrahydrofolate + L-serine. Its pathway is one-carbon metabolism; tetrahydrofolate interconversion. The protein operates within amino-acid biosynthesis; glycine biosynthesis; glycine from L-serine: step 1/1. Catalyzes the reversible interconversion of serine and glycine with tetrahydrofolate (THF) serving as the one-carbon carrier. This reaction serves as the major source of one-carbon groups required for the biosynthesis of purines, thymidylate, methionine, and other important biomolecules. Also exhibits THF-independent aldolase activity toward beta-hydroxyamino acids, producing glycine and aldehydes, via a retro-aldol mechanism. This is Serine hydroxymethyltransferase from Shewanella sp. (strain W3-18-1).